The primary structure comprises 128 residues: Ribonuclease P protein component (128 aa).

Belongs to the RnpA family. Consists of a catalytic RNA component (M1 or rnpB) and a protein subunit.

The catalysed reaction is Endonucleolytic cleavage of RNA, removing 5'-extranucleotides from tRNA precursor.. RNaseP catalyzes the removal of the 5'-leader sequence from pre-tRNA to produce the mature 5'-terminus. It can also cleave other RNA substrates such as 4.5S RNA. The protein component plays an auxiliary but essential role in vivo by binding to the 5'-leader sequence and broadening the substrate specificity of the ribozyme. The polypeptide is Ribonuclease P protein component (Prochlorococcus marinus (strain NATL2A)).